The chain runs to 413 residues: Probable protein phosphatase 2C 78 (413 aa).

The disordered stretch occupies residues 21–40 (KKATTTTRRRERSSSQAARR). One can recognise a PPM-type phosphatase domain in the interval 111–409 (KYGVASVCGR…DNVSVVVVDL (299 aa)). The Mn(2+) site is built by aspartate 153, glycine 154, aspartate 327, and aspartate 400.

This sequence belongs to the PP2C family. Requires Mg(2+) as cofactor. It depends on Mn(2+) as a cofactor.

It is found in the golgi apparatus. It localises to the nucleus. The enzyme catalyses O-phospho-L-seryl-[protein] + H2O = L-seryl-[protein] + phosphate. It carries out the reaction O-phospho-L-threonyl-[protein] + H2O = L-threonyl-[protein] + phosphate. Its function is as follows. Acts as a negative regulator of abscisic acid (ABA) signaling for stomatal closure in leaves, and controls water loss during leaf senescence. Activated by the NAC029/NAP transcription factor during ABA signaling in senescing leaves. Functions as a negative regulator of osmotic stress and ABA signaling. Acts as a negative regulator of response to drought. This chain is Probable protein phosphatase 2C 78, found in Arabidopsis thaliana (Mouse-ear cress).